The chain runs to 134 residues: Small ribosomal subunit protein uS11 (134 aa).

The protein belongs to the universal ribosomal protein uS11 family. Part of the 30S ribosomal subunit. Interacts with proteins S7 and S18. Binds to IF-3.

Its function is as follows. Located on the platform of the 30S subunit, it bridges several disparate RNA helices of the 16S rRNA. Forms part of the Shine-Dalgarno cleft in the 70S ribosome. The protein is Small ribosomal subunit protein uS11 of Corynebacterium jeikeium (strain K411).